Reading from the N-terminus, the 473-residue chain is Kynurenine 3-monooxygenase (473 aa).

It belongs to the aromatic-ring hydroxylase family. KMO subfamily. FAD serves as cofactor.

The protein resides in the mitochondrion outer membrane. It carries out the reaction L-kynurenine + NADPH + O2 + H(+) = 3-hydroxy-L-kynurenine + NADP(+) + H2O. Its pathway is cofactor biosynthesis; NAD(+) biosynthesis; quinolinate from L-kynurenine: step 1/3. Functionally, catalyzes the hydroxylation of L-kynurenine (L-Kyn) to form 3-hydroxy-L-kynurenine (L-3OHKyn). Required for synthesis of quinolinic acid. This chain is Kynurenine 3-monooxygenase, found in Debaryomyces hansenii (strain ATCC 36239 / CBS 767 / BCRC 21394 / JCM 1990 / NBRC 0083 / IGC 2968) (Yeast).